The following is a 408-amino-acid chain: Protein ZNF365 (408 aa).

Ser-16 is modified (phosphoserine). The C2H2-type; degenerate zinc-finger motif lies at Phe-26 to His-51. 2 positions are modified to phosphoserine: Ser-139 and Ser-146. Residues Val-170 to Ala-298 are a coiled coil. At Thr-176 the chain carries Phosphothreonine. Position 370 is a phosphoserine (Ser-370).

Homodimer. Interacts with NDE1 and NDEL1. Interacts with DISC1. Interacts with PARP1. Interacts with MCRS1. As to expression, detected in several tissues, with highest levels in brain. Also expressed during embryonic development. Expressed in cerebral cortex, hippocampus, striatum, inferior colliculus and thalamus.

It localises to the cytoplasm. The protein resides in the cytoskeleton. Its subcellular location is the microtubule organizing center. It is found in the centrosome. Functionally, contributes to genomic stability by preventing telomere dysfunction. Involved in the morphogenesis of basket cells in the somatosensory cortex during embryogenesis. Involved in the positive regulation of oligodendrocyte differentiation during postnatal growth. Involved in dendritic arborization, morphogenesis of spine density dendrite, and establishment of postsynaptic dendrite density in cortical pyramidal neurons. Involved in the regulation of neurogenesis. Negatively regulates neurite outgrowth. Involved in homologous recombination (HR) repair pathway. Required for proper resolution of DNA double-strand breaks (DSBs) by HR. Is required for recovery of stalled replication forks, and directly contributes to genomic stability. Interacts with PARP1 and mediates MRE11-dependent DNA end resection during replication fork recovery. The polypeptide is Protein ZNF365 (Znf365) (Mus musculus (Mouse)).